The primary structure comprises 360 residues: Peptide chain release factor 1 (360 aa).

N5-methylglutamine is present on Gln237.

Belongs to the prokaryotic/mitochondrial release factor family. In terms of processing, methylated by PrmC. Methylation increases the termination efficiency of RF1.

It is found in the cytoplasm. Peptide chain release factor 1 directs the termination of translation in response to the peptide chain termination codons UAG and UAA. The polypeptide is Peptide chain release factor 1 (Pseudomonas savastanoi pv. phaseolicola (strain 1448A / Race 6) (Pseudomonas syringae pv. phaseolicola (strain 1448A / Race 6))).